Here is a 451-residue protein sequence, read N- to C-terminus: tRNA modification GTPase MnmE (451 aa).

(6S)-5-formyl-5,6,7,8-tetrahydrofolate contacts are provided by Arg28, Glu85, and Lys124. A TrmE-type G domain is found at 220–377 (GMNVVLVGQP…LRSELLRVAG (158 aa)). Residue Asn230 coordinates K(+). GTP contacts are provided by residues 230-235 (NVGKSS), 249-255 (TDIAGTT), and 274-277 (DTAG). Ser234 is a Mg(2+) binding site. The K(+) site is built by Thr249, Ile251, and Thr254. Thr255 is a Mg(2+) binding site. Lys451 serves as a coordination point for (6S)-5-formyl-5,6,7,8-tetrahydrofolate.

This sequence belongs to the TRAFAC class TrmE-Era-EngA-EngB-Septin-like GTPase superfamily. TrmE GTPase family. In terms of assembly, homodimer. Heterotetramer of two MnmE and two MnmG subunits. K(+) is required as a cofactor.

The protein localises to the cytoplasm. Functionally, exhibits a very high intrinsic GTPase hydrolysis rate. Involved in the addition of a carboxymethylaminomethyl (cmnm) group at the wobble position (U34) of certain tRNAs, forming tRNA-cmnm(5)s(2)U34. The chain is tRNA modification GTPase MnmE from Aromatoleum aromaticum (strain DSM 19018 / LMG 30748 / EbN1) (Azoarcus sp. (strain EbN1)).